Here is a 541-residue protein sequence, read N- to C-terminus: uncharacterized protein (541 aa).

A signal peptide (tat-type signal) is located at residues 1-55 (MTKTVTRAGGASGPQQFQSGGETMKYEITRRRFLAASSAVLAAPAIVTMVRPARA). A disordered region spans residues 339–362 (RRSPSGISSPRSNRQPKAEALSAR). Over residues 341-351 (SPSGISSPRSN) the composition is skewed to low complexity. Helical transmembrane passes span 379 to 399 (AIVWFARQVVIFSGIALMVFM), 420 to 440 (LPVLIFPWFILGGIVLAAHSG), 466 to 486 (LVSAGAFLMLGYQAYLVGEIA), and 500 to 520 (VGYFALAVGSVLVAIVTLAVA).

The protein belongs to the bacterial solute-binding protein 7 family. Predicted to be exported by the Tat system. The position of the signal peptide cleavage has not been experimentally proven.

The protein localises to the cell membrane. This is an uncharacterized protein from Sinorhizobium fredii (strain NBRC 101917 / NGR234).